We begin with the raw amino-acid sequence, 181 residues long: Putative manganese efflux pump MntP (181 aa).

Helical transmembrane passes span 5-25, 36-56, 66-86, 102-122, 130-150, and 158-178; these read LIAL…IALG, MFKV…MGMV, GLFA…VMIV, IGLF…GLSL, ALAV…GLFI, and VGPY…VKLL.

This sequence belongs to the MntP (TC 9.B.29) family.

It localises to the cell membrane. Functionally, probably functions as a manganese efflux pump. In Halalkalibacterium halodurans (strain ATCC BAA-125 / DSM 18197 / FERM 7344 / JCM 9153 / C-125) (Bacillus halodurans), this protein is Putative manganese efflux pump MntP.